A 260-amino-acid polypeptide reads, in one-letter code: Snake venom serine protease 2B (260 aa).

An N-terminal signal peptide occupies residues 1-18; the sequence is MVLIRVLANLLILQLSYA. Residues 19-24 constitute a propeptide that is removed on maturation; it reads QKSSEL. In terms of domain architecture, Peptidase S1 spans 25–251; the sequence is VVGGDECNIN…HLDWIQSIIA (227 aa). 6 disulfides stabilise this stretch: C31–C165, C52–C68, C102–C258, C144–C212, C176–C191, and C202–C227. H67 (charge relay system) is an active-site residue. N-linked (GlcNAc...) asparagine glycosylation is found at N101 and N105. Catalysis depends on D112, which acts as the Charge relay system. 2 N-linked (GlcNAc...) asparagine glycosylation sites follow: N123 and N156. S206 acts as the Charge relay system in catalysis.

The protein belongs to the peptidase S1 family. Snake venom subfamily. Monomer. As to expression, expressed by the venom gland.

The protein resides in the secreted. Snake venom serine protease that may act in the hemostasis system of the prey. The chain is Snake venom serine protease 2B (TLG2B) from Craspedocephalus gramineus (Bamboo pit viper).